The primary structure comprises 668 residues: DNA mismatch repair protein MutL (668 aa).

Residues 437-459 are disordered; sequence TYQSQYSETGSHSQETLPLSEQK. A compositionally biased stretch (polar residues) spans 438 to 459; that stretch reads YQSQYSETGSHSQETLPLSEQK.

This sequence belongs to the DNA mismatch repair MutL/HexB family.

In terms of biological role, this protein is involved in the repair of mismatches in DNA. It is required for dam-dependent methyl-directed DNA mismatch repair. May act as a 'molecular matchmaker', a protein that promotes the formation of a stable complex between two or more DNA-binding proteins in an ATP-dependent manner without itself being part of a final effector complex. In Leuconostoc citreum (strain KM20), this protein is DNA mismatch repair protein MutL.